The chain runs to 119 residues: Large ribosomal subunit protein bL19 (119 aa).

It belongs to the bacterial ribosomal protein bL19 family.

This protein is located at the 30S-50S ribosomal subunit interface and may play a role in the structure and function of the aminoacyl-tRNA binding site. This Mycoplasma pneumoniae (strain ATCC 29342 / M129 / Subtype 1) (Mycoplasmoides pneumoniae) protein is Large ribosomal subunit protein bL19 (rplS).